Here is a 1790-residue protein sequence, read N- to C-terminus: MPVKRQSKVYYESDSDDDDDEFKELATLRKPISNRDNPLSLQFEIPASVQSVIHKIEESHIFRAKEEVIWRLTEIMSNVELIMTRYNIDSMSPGRKGSSSESQKKKRKAFLEKIATVMTNVDLRERTLSKILSWLEEWNLILSEVSAINMDDYYHWTVKMELIPDTLKRISKNVDSLIQMALLLVEEKKRAKKRILARGTLWKAWKDRAIKRPATAQALRLDQMIFDQIGLNAKVSEIQGMLQELIGTAMFSKLENTAIKYMSTTVINLSKALNTVSDELKLARALGVTLTPEQYKEDRISLTPLQAQVLGITLNLQQAKALGITLTPEQVKAQRVNLIPQQYQVHGTTLTTQQAEAQRTNLTPEQAKALGLPLIPPKPITFTREQTQALGITPTHQPITLTSEQVQALGITPTHQPITLTPEQAQALALILTTEQVKTQRINLSPDQTQALGITPTPQPITFTPEQTQALGITPTPQLITLTPEQAKALANTLTAEQVSLSPQQAEALGITPTPQPTTLTPEQAQALGITPTPQPITLTPEQVQALGITPNRESITLSPEQAQALGITPTPQPTTLTPEQTQALGITPTPQPITLTPEQAQALGITPTPQPITLTPEQTQALGITPTPQPITLTPEQAQALGITPTPQPITLTPEQTQALGITPTPQPITLTPEQAQALGITPTPQPITLTPEQAQALGITPTPQPITLTPEQAQALGITPTPQPITLTPEQTQALGITPTPQPITLTPEQAQALGITPTPQPITLTPEQVQALGITPTPQPITLTPEQAQALGITPTPQPITLTPEQAQALGITPTPQPITLTPEQTQALGITPTPQPITLTPEQAQALGITPTPQPITLTPELVQALGITPTPQPITLTPEQAQALGITPTPQPTTLSPEQAQALGITPTPQPITLTPEQAQALGITPTPQPTTLSPEQAQALGISLIPKQQEISLSPEQAQALGLTLTPQQAQVQKIYLTPQQAQALGITVSPEQAKAKGISLTPEEAHSLGIILTVEQAKAKRINLTPQQAQDLGLTLTPEQAQDLGISLIPKQEISFSPLQAQAMGLTLTPQQAQVQKIYLTPQQAQALGITVSPEQAKGISLTPEEAHSLGIILTVEQAKAQRINLTPQQAQDLGLTLTPEQAQDLGISLIPKQQEISFSPLQAQAMGLTLTPQQAQVQKIYLTPQQAQALGITVSPEQAKGISLTPEEAHSLGIILTVEQAKAQRINLTPQQAQDLGITLTPEQAQDLGISLIPKQQEISFSPLQAQAMGLTLTPQQAQVQKIYLTPQQAQALGITVSPEQAKGISLTPEEAHSLGIALTVEQAKAQRINLTPQQAQDLGLTLTPEQAQDLGIASTLKQAEAVGIIPTPTPEPYQERRLSLTSEQVQALRTSFPTKETLSLGIYLTPKQAQYLGITLTASQAKVMKICLTPEQAQALGITVTPKQAKARRTSLTPEQAQALGVILTPEQAQAHRITVTPEQAQALGIALTPEQAHALGIALTPEQAQAQDKPWTPTPVSSTREAKMIVSPTDQHPEDGYVVDVEAQRKNLVTLNQAAQTSALPAQYLTIAKNLIIELLHIDTVRLGYLSRKYVAYRLIQLARNHLTKRVKTIQNTGKGYEVQSLYTMLDRIDQYQKKVMHSWTDKQKQLEQRRKQCLRSMTQFFSQLERGYKLSLSQPMPSIPSFKKIPGFTKLQRPVLELLIDDSKRSDLFKTLGQASVEAVWNADLSTSSYPIIEKAPMSALWAQLGGYPDIPKLLQLDIQSTFRKSLASIRSQSKKIRK.

It belongs to the FAM186 family.

This chain is Protein FAM186A (FAM186A), found in Mus musculus (Mouse).